The sequence spans 624 residues: Diatom spindle kinesin-1 (624 aa).

A disordered region spans residues 1 to 59; that stretch reads MNAANRRKSTSTVGITGRKDATRMKIEQMEKERKERRKTMMQRKEARKQEHMKNIEAGN. The interval 1–85 is globular; it reads MNAANRRKST…QENKIGDKSP (85 aa). 2 stretches are compositionally biased toward basic and acidic residues: residues 17-33 and 42-54; these read GRKD…EKER and QRKE…HMKN. The Kinesin motor domain occupies 95–411; it reads NICIAVRKRP…LRYADRIKEQ (317 aa). Residue 186–193 participates in ATP binding; it reads GQTGSGKT. Residues 426–624 adopt a coiled-coil conformation; the sequence is SNREIMPSKE…LARQVQLTQY (199 aa). A compositionally biased stretch (acidic residues) spans 478-511; the sequence is VDEEEADDEEGDYEEESEDLDYEDSEGQDYEEAV. A disordered region spans residues 478–528; sequence VDEEEADDEEGDYEEESEDLDYEDSEGQDYEEAVESQYDHSQEAQEGEEEL.

Belongs to the TRAFAC class myosin-kinesin ATPase superfamily. Kinesin family. MCAK/KIF2 subfamily.

The protein resides in the cytoplasm. The protein localises to the cytoskeleton. Functionally, involved in anaphase spindle elongation. In Cylindrotheca fusiformis (Marine diatom), this protein is Diatom spindle kinesin-1 (DSK1).